We begin with the raw amino-acid sequence, 432 residues long: MSLNIETTQGLERRVAITVPTEIVSKAVREEFKRAAKNVRVDGFRKGHVPAHIIEQRFGASIRQDVLNDLLPRHFFDAVIAEKINIAGRPTFAIETFEEGKDLVFTATFEVYPEVKLQGLENIKVEKPTVEITEADIDKMIDVLRKQQATWAESQDVVKADDRVTIDFVGSVDGEEFEGGKATDFVLFMGQGRMIPGFEEGIVGHKAGEQFDIDVTFPAEYHAENLKGKAAKFAITLKKIENMVLPELTDEFVAKFGPNTKSVADLRAEIRKNMERELKNALVSRVKQQVINGLIEQNPIDVPASAVEEEINVLRNQAAQRFGGNAQQTAQLPRELFEAEATRRVQVGLLFSEVIKSNELKADEERAKAMIADIASAYEQPAEVVEYYSKNEELMNNIRNVVLEEQAVDAVLAKAQVTEKVSSFDEIMNPQA.

Positions 161 to 246 (DDRVTIDFVG…LKKIENMVLP (86 aa)) constitute a PPIase FKBP-type domain.

It belongs to the FKBP-type PPIase family. Tig subfamily.

The protein localises to the cytoplasm. The catalysed reaction is [protein]-peptidylproline (omega=180) = [protein]-peptidylproline (omega=0). In terms of biological role, involved in protein export. Acts as a chaperone by maintaining the newly synthesized protein in an open conformation. Functions as a peptidyl-prolyl cis-trans isomerase. This chain is Trigger factor, found in Haemophilus influenzae (strain 86-028NP).